The following is a 477-amino-acid chain: NADH-quinone oxidoreductase subunit N (477 aa).

A run of 13 helical transmembrane segments spans residues 7–27 (VLAH…LILI), 37–57 (GPMT…LVLG), 77–97 (FMKV…QTYL), 109–129 (ILIL…GLIA), 162–182 (FVLG…IYGF), 201–221 (LGVV…MSTV), 233–253 (GAPT…AIAI), 272–292 (IIVF…IGQT), 297–317 (LMAY…AAGT), 323–343 (GVLA…AAIL), 369–389 (AFFL…AGFF), 402–424 (HLYP…YLRI), and 446–466 (AVLI…GSFV).

It belongs to the complex I subunit 2 family. As to quaternary structure, NDH-1 is composed of 14 different subunits. Subunits NuoA, H, J, K, L, M, N constitute the membrane sector of the complex.

The protein resides in the cell inner membrane. It carries out the reaction a quinone + NADH + 5 H(+)(in) = a quinol + NAD(+) + 4 H(+)(out). In terms of biological role, NDH-1 shuttles electrons from NADH, via FMN and iron-sulfur (Fe-S) centers, to quinones in the respiratory chain. The immediate electron acceptor for the enzyme in this species is believed to be ubiquinone. Couples the redox reaction to proton translocation (for every two electrons transferred, four hydrogen ions are translocated across the cytoplasmic membrane), and thus conserves the redox energy in a proton gradient. This is NADH-quinone oxidoreductase subunit N from Beijerinckia indica subsp. indica (strain ATCC 9039 / DSM 1715 / NCIMB 8712).